Here is a 351-residue protein sequence, read N- to C-terminus: MDLVKLQKSLDNISFGILFATMLIYWLGAAFPRIPYLSILGSTGMAIANLCIATLLGARWLEASYFPISNLYESLFFLTWGITTIHLIAENMSGARLVGVFTSPIAMGISAFAALTLPSNMQISEPLVPALKSNWLMMHVSVMMLSYATLIVGALLAIAFLIITSGQKVELSGSSFGTRSSRNNHFVKYQKNWQLQKERPLLKEIKNNYKPFPQSTKNDHSQTSVLEITEVTQKVDPEIILSPERLNIAQILDNISYRIIGLGFPLLTIGIIAGAVWANEAWGSYWSWDPKETWALITWLVFAAYLHARITKGWQGRKPAILAATGFAVVWVCYLGVNLLGKGLHSYGWFL.

A run of 8 helical transmembrane segments spans residues 12 to 32 (NISF…AAFP), 37 to 57 (LSIL…TLLG), 68 to 88 (ISNL…IHLI), 97 to 117 (LVGV…ALTL), 143 to 163 (MMLS…FLII), 259 to 279 (IIGL…VWAN), 294 to 314 (WALI…TKGW), and 320 to 340 (AILA…VNLL).

Belongs to the CcmF/CycK/Ccl1/NrfE/CcsA family. In terms of assembly, may interact with ccs1.

The protein resides in the cellular thylakoid membrane. Functionally, required during biogenesis of c-type cytochromes (cytochrome c6 and cytochrome f) at the step of heme attachment. The chain is Cytochrome c biogenesis protein CcsA from Trichodesmium erythraeum (strain IMS101).